We begin with the raw amino-acid sequence, 418 residues long: Probable cysteine desulfurase 2 (418 aa).

An N6-(pyridoxal phosphate)lysine modification is found at K234. C374 serves as the catalytic Cysteine persulfide intermediate.

This sequence belongs to the class-V pyridoxal-phosphate-dependent aminotransferase family. Csd subfamily. Pyridoxal 5'-phosphate is required as a cofactor.

It carries out the reaction (sulfur carrier)-H + L-cysteine = (sulfur carrier)-SH + L-alanine. Functionally, catalyzes the removal of elemental sulfur and selenium atoms from L-cysteine, L-cystine, L-selenocysteine, and L-selenocystine to produce L-alanine. This is Probable cysteine desulfurase 2 (csd2) from Mycobacterium leprae (strain TN).